An 84-amino-acid chain; its full sequence is Cytochrome b559 subunit alpha (84 aa).

The helical transmembrane segment at 22 to 36 (IIHSITIPSLFVSGW) threads the bilayer. Position 24 (His24) interacts with heme.

Belongs to the PsbE/PsbF family. Heterodimer of an alpha subunit and a beta subunit. PSII is composed of 1 copy each of membrane proteins PsbA, PsbB, PsbC, PsbD, PsbE, PsbF, PsbH, PsbI, PsbJ, PsbK, PsbL, PsbM, PsbT, PsbX, PsbY, PsbZ, Psb30/Ycf12, at least 3 peripheral proteins of the oxygen-evolving complex and a large number of cofactors. It forms dimeric complexes. Requires heme b as cofactor.

Its subcellular location is the plastid. It is found in the chloroplast thylakoid membrane. In terms of biological role, this b-type cytochrome is tightly associated with the reaction center of photosystem II (PSII). PSII is a light-driven water:plastoquinone oxidoreductase that uses light energy to abstract electrons from H(2)O, generating O(2) and a proton gradient subsequently used for ATP formation. It consists of a core antenna complex that captures photons, and an electron transfer chain that converts photonic excitation into a charge separation. The protein is Cytochrome b559 subunit alpha of Phaeodactylum tricornutum (strain CCAP 1055/1).